The following is a 444-amino-acid chain: Phosphoglucosamine mutase (444 aa).

The active-site Phosphoserine intermediate is serine 101. Residues serine 101, aspartate 239, aspartate 241, and aspartate 243 each coordinate Mg(2+). Position 101 is a phosphoserine (serine 101).

This sequence belongs to the phosphohexose mutase family. Requires Mg(2+) as cofactor. Activated by phosphorylation.

The catalysed reaction is alpha-D-glucosamine 1-phosphate = D-glucosamine 6-phosphate. Catalyzes the conversion of glucosamine-6-phosphate to glucosamine-1-phosphate. The chain is Phosphoglucosamine mutase from Alcanivorax borkumensis (strain ATCC 700651 / DSM 11573 / NCIMB 13689 / SK2).